The following is a 91-amino-acid chain: Small ribosomal subunit protein uS19 (91 aa).

Belongs to the universal ribosomal protein uS19 family.

Its function is as follows. Protein S19 forms a complex with S13 that binds strongly to the 16S ribosomal RNA. This is Small ribosomal subunit protein uS19 from Syntrophotalea carbinolica (strain DSM 2380 / NBRC 103641 / GraBd1) (Pelobacter carbinolicus).